A 458-amino-acid chain; its full sequence is Argininosuccinate lyase (458 aa).

Belongs to the lyase 1 family. Argininosuccinate lyase subfamily.

It localises to the cytoplasm. It catalyses the reaction 2-(N(omega)-L-arginino)succinate = fumarate + L-arginine. Its pathway is amino-acid biosynthesis; L-arginine biosynthesis; L-arginine from L-ornithine and carbamoyl phosphate: step 3/3. This is Argininosuccinate lyase from Geobacter metallireducens (strain ATCC 53774 / DSM 7210 / GS-15).